Consider the following 122-residue polypeptide: Probable DNA-directed RNA polymerase II subunit RPB11 (122 aa).

The protein belongs to the archaeal Rpo11/eukaryotic RPB11/RPC19 RNA polymerase subunit family. In terms of assembly, component of the RNA polymerase II (Pol II) complex consisting of 12 subunits.

The protein localises to the nucleus. Functionally, DNA-dependent RNA polymerase catalyzes the transcription of DNA into RNA using the four ribonucleoside triphosphates as substrates. Component of RNA polymerase II which synthesizes mRNA precursors and many functional non-coding RNAs. Pol II is the central component of the basal RNA polymerase II transcription machinery. It is composed of mobile elements that move relative to each other. RPB11 is part of the core element with the central large cleft. In Caenorhabditis briggsae, this protein is Probable DNA-directed RNA polymerase II subunit RPB11 (rpb-11).